Here is a 263-residue protein sequence, read N- to C-terminus: Protein PUN1 (263 aa).

Residues 1–6 (MRNFFT) are Cytoplasmic-facing. The chain crosses the membrane as a helical span at residues 7–27 (LFFAAIFSLGALILAIVACAG). Residues 28–143 (STKNYSPINK…MTYYNNLVKC (116 aa)) lie on the Extracellular side of the membrane. Asn-100 carries an N-linked (GlcNAc...) asparagine glycan. Residues 144–164 (MFITILIGIVLTFVNLVFNVL) traverse the membrane as a helical segment. Residues 165–172 (RWIIHIRP) lie on the Cytoplasmic side of the membrane. A helical transmembrane segment spans residues 173–193 (LTWFGAFFSFFAFAALLVSIG). Residues 194–223 (SCLGTYSYIKYILKHNYSDYGISMSIGRNY) are Extracellular-facing. The N-linked (GlcNAc...) asparagine glycan is linked to Asn-209. A helical membrane pass occupies residues 224-244 (QGLMWGAVVGALLNFILWCSV). Residues 245-263 (RSRPTVIYANAPIEEKPLI) lie on the Cytoplasmic side of the membrane. Lys-260 is covalently cross-linked (Glycyl lysine isopeptide (Lys-Gly) (interchain with G-Cter in ubiquitin)).

It belongs to the SUR7 family. Post-translationally, N-glycosylated.

It localises to the cell membrane. In terms of biological role, contributes to the wild-type cellular response to nitrogen stress through signaling pathways that regulate the expression of genes involved in amino acid biosynthesis. Required for wild-type filamentous growth, cell growth, and cell-cell adhesion. This is Protein PUN1 (PUN1) from Saccharomyces cerevisiae (strain ATCC 204508 / S288c) (Baker's yeast).